A 200-amino-acid chain; its full sequence is MMSKQNKKDWKKFKDEHKEEHKVENEILEEETDEESQHQEPALGHPSYTALEEQLTLAEQKAHENWEKSVRALAELENVRRRMEREVANAHKYGVEKLISALLPVVDSLEQALQLADKNSDPSMHEGLELTMKLFLDALQKFDVEQIDPLGQTFDPQQHEAMSMQPAPGAPPNSVITVFQKGYKLSDRVIRPARVIVSTK.

The span at 1–25 (MMSKQNKKDWKKFKDEHKEEHKVEN) shows a compositional bias: basic and acidic residues. Residues 1–52 (MMSKQNKKDWKKFKDEHKEEHKVENEILEEETDEESQHQEPALGHPSYTALE) are disordered.

This sequence belongs to the GrpE family. As to quaternary structure, homodimer.

The protein localises to the cytoplasm. In terms of biological role, participates actively in the response to hyperosmotic and heat shock by preventing the aggregation of stress-denatured proteins, in association with DnaK and GrpE. It is the nucleotide exchange factor for DnaK and may function as a thermosensor. Unfolded proteins bind initially to DnaJ; upon interaction with the DnaJ-bound protein, DnaK hydrolyzes its bound ATP, resulting in the formation of a stable complex. GrpE releases ADP from DnaK; ATP binding to DnaK triggers the release of the substrate protein, thus completing the reaction cycle. Several rounds of ATP-dependent interactions between DnaJ, DnaK and GrpE are required for fully efficient folding. The protein is Protein GrpE of Legionella pneumophila subsp. pneumophila (strain Philadelphia 1 / ATCC 33152 / DSM 7513).